The following is a 432-amino-acid chain: Carbohydrate esterase MZ0003 (432 aa).

An N-terminal signal peptide occupies residues 1–25; that stretch reads MQRTCVLIVLIVTSTMWTPDPDVYA. Residues 266 to 271 carry the GXSYXG catalytic site motif motif; it reads GHSRLG. Ser-268 (nucleophile) is an active-site residue. 2 residues coordinate substrate: Lys-272 and Trp-359. The active-site Charge relay system is the His-409.

It belongs to the carbohydrate esterase 15 (CE15) family. It depends on Does not require metal ions for activity. as a cofactor.

Its subcellular location is the periplasm. With respect to regulation, is inhibited by PMSF and by NaF in vitro, which is consistent with the catalytic nucleophile being a serine. Displays some glucuronoyl esterase activity in vitro, since it is able to hydrolyze methyl 4-O-methyl-D-glucopyranosyluronate, allyl D-glucuronate, benzyl D-glucuronate and D-glucuronic acid methyl ester. However, esters of glucuronic acid are probably not its biological substrate, as they are not present in the marine environment. Can also hydrolyze a range of other esters, including p-nitrophenyl acetate. More likely biologically-relevant substrates for MZ0003 and other marine bacterial CE15s are algal cell wall polysaccharides, as these would be readily available in this environment and could be used as energy sources. The protein is Carbohydrate esterase MZ0003 of Unknown prokaryotic organism.